A 709-amino-acid polypeptide reads, in one-letter code: Leucine-rich repeat-containing protein 4B (709 aa).

An N-terminal signal peptide occupies residues 1–38 (MAQAHIQGSPCPLLPPGRMSWPQGALLLLWLFSPPLRA). In terms of domain architecture, LRRNT spans 50–88 (GGGSPPATSCPAACSCSNQASRVICTRRELAEVPASIPV). 9 LRR repeats span residues 89-110 (NTRYLNLQENSIQVIRTDTFKH), 113-134 (HLEILQLSKNLVRKIEVGAFNG), 137-158 (SLNTLELFDNRLTTVPTQAFEY), 161-182 (KLRELWLRNNPIESIPSYAFNR), 185-207 (SLRRLDLGELKRLEYISEAAFEG), 210-231 (NLRYLNLGMCNLKDIPNLTALV), 232-253 (RLEELELSGNRLDLIRPGSFQG), 256-277 (SLRKLWLMHAQVATIERNAFDD), and 280-301 (SLEELNLSHNNLMSLPHDLFTP). The region spanning 313 to 365 (NPWHCNCDVLWLSWWLKETVPSNTTCCARCHAPAGLKGRYIGELDQSHFTCYA) is the LRRCT domain. The region spanning 366 to 454 (PVIVEPPTDL…GNTTASATLN (89 aa)) is the Ig-like C2-type domain. N-linked (GlcNAc...) asparagine glycosylation is found at asparagine 376, asparagine 402, asparagine 424, asparagine 427, and asparagine 446. A disulfide bridge links cysteine 387 with cysteine 438. Residues 496–552 (TQPGEEAQQPRGTEKEPPGPTTDGAWGGGRPDAAAPASASTTAPAPRSSRPTEKAFT) are disordered. Over residues 528-544 (AAAPASASTTAPAPRSS) the composition is skewed to low complexity. Residues 575–595 (IIIGCFVAITFMAAVMLVAFY) traverse the membrane as a helical segment. At serine 689 the chain carries Phosphoserine.

In terms of assembly, interacts with PTPRF. Interacts with DLG4. In terms of processing, N-glycosylated. O-glycosylated; contains sialic acid. Mainly expressed in the brain. Widespread distribution in various brain regions (at protein level). Detected both embryonically and postnatally with stronger expression in postnatal stages.

It is found in the membrane. The protein localises to the presynaptic cell membrane. Its function is as follows. Synaptic adhesion protein. Regulates the formation of excitatory synapses. The trans-synaptic adhesion between LRRC4B and PTPRF regulates the formation of excitatory synapses in a bidirectional manner. The sequence is that of Leucine-rich repeat-containing protein 4B (Lrrc4b) from Rattus norvegicus (Rat).